A 205-amino-acid polypeptide reads, in one-letter code: Dr1-associated corepressor (205 aa).

Residues 14–77 form the Histone-fold domain; that stretch reads PARIKKIMQT…SHLKQCIELE (64 aa). The segment at 91–205 is disordered; sequence PDMQGDGEDN…DEEDEEDYDS (115 aa). Positions 98 to 108 are enriched in basic and acidic residues; that stretch reads EDNHMDGDKGA. The span at 114–125 shows a compositional bias: gly residues; sequence PGSGGRKNGGMG. The span at 138-155 shows a compositional bias: acidic residues; that stretch reads SEQEDESEDTDTDGEEET. Residues 184–193 show a composition bias toward pro residues; that stretch reads PLPPAPPGPS. Positions 195-205 are enriched in acidic residues; it reads PDEEDEEDYDS.

This sequence belongs to the NC2 alpha/DRAP1 family. Heterodimer with DR1. Binds BTAF1. In terms of processing, phosphorylation reduces DNA binding, but has no effect on heterodimerization and TBP binding. Ubiquitous. Highly expressed in adult testis, heart, skeletal muscle, pancreas and brain, and in fetal brain, liver and kidney.

It localises to the nucleus. The association of the DR1/DRAP1 heterodimer with TBP results in a functional repression of both activated and basal transcription of class II genes. This interaction precludes the formation of a transcription-competent complex by inhibiting the association of TFIIA and/or TFIIB with TBP. Can bind to DNA on its own. The chain is Dr1-associated corepressor (DRAP1) from Homo sapiens (Human).